A 123-amino-acid polypeptide reads, in one-letter code: Small ribosomal subunit protein uS12 (123 aa).

D89 is modified (3-methylthioaspartic acid).

The protein belongs to the universal ribosomal protein uS12 family. Part of the 30S ribosomal subunit. Contacts proteins S8 and S17. May interact with IF1 in the 30S initiation complex.

Its function is as follows. With S4 and S5 plays an important role in translational accuracy. In terms of biological role, interacts with and stabilizes bases of the 16S rRNA that are involved in tRNA selection in the A site and with the mRNA backbone. Located at the interface of the 30S and 50S subunits, it traverses the body of the 30S subunit contacting proteins on the other side and probably holding the rRNA structure together. The combined cluster of proteins S8, S12 and S17 appears to hold together the shoulder and platform of the 30S subunit. The sequence is that of Small ribosomal subunit protein uS12 from Anaeromyxobacter sp. (strain Fw109-5).